A 366-amino-acid polypeptide reads, in one-letter code: Glutamate 5-kinase (366 aa).

Lys-17 provides a ligand contact to ATP. 3 residues coordinate substrate: Ser-57, Asp-144, and Asn-156. ATP is bound by residues 176–177 (SD) and 216–222 (TGGMASK). The PUA domain occupies 278-352 (RGALVLDDGA…GRSTTELPDT (75 aa)).

Belongs to the glutamate 5-kinase family.

Its subcellular location is the cytoplasm. The enzyme catalyses L-glutamate + ATP = L-glutamyl 5-phosphate + ADP. It functions in the pathway amino-acid biosynthesis; L-proline biosynthesis; L-glutamate 5-semialdehyde from L-glutamate: step 1/2. Its function is as follows. Catalyzes the transfer of a phosphate group to glutamate to form L-glutamate 5-phosphate. The polypeptide is Glutamate 5-kinase (Nocardia farcinica (strain IFM 10152)).